A 286-amino-acid chain; its full sequence is PTS system mannose-specific EIID component (286 aa).

The residue at position 1 (Met1) is an N-formylmethionine. Residues 1-17 (MSEMVDTTQTTTEKKLT) are Cytoplasmic-facing. Residues 14-284 (KKLTQSDIRG…GIAGYACGLL (271 aa)) enclose the PTS EIID domain. The stretch at 18 to 55 (QSDIRGVFLRSNLFQGSWNFERMQALGFCFSMVPAIRR) is an intramembrane region. At 56–62 (LYPENNE) the chain is on the cytoplasmic side. An intramembrane segment occupies 63–95 (ARKQAIRRHLEFFNTQPFVAAPILGVTLALEEQ). Topologically, residues 96–103 (RANGAEID) are cytoplasmic. The chain crosses the lipid bilayer at residues 104-143 (DGAINGIKVGLMGPLAGVGDPIFWGTVRPVFAALGAGIAM). The Periplasmic portion of the chain corresponds to 144 to 147 (SGSL). The chain crosses the lipid bilayer at residues 148–176 (LGPLLFFILFNLVRLATRYYGVAYGYSKG). Topologically, residues 177 to 186 (IDIVKDMGGG) are cytoplasmic. At 187-212 (FLQKLTEGASILGLFVMGALVNKWTH) the chain is embedded in the membrane. The Periplasmic segment spans residues 213–244 (VNIPLVVSRITDQTGKEHVTTVQTILDQLMPG). The segment at 245 to 258 (LVPLLLTFACMWLL) is a transmembrane helix. At 259–264 (RKKVNP) the chain is on the cytoplasmic side. A transmembrane helix spans residues 265-283 (LWIIVGFFVIGIAGYACGL). Residues 284 to 286 (LGL) lie on the Periplasmic side of the membrane.

In terms of assembly, homotrimer of protomers that are composed of two subunits, IIC and IID.

It localises to the cell inner membrane. Functionally, the phosphoenolpyruvate-dependent sugar phosphotransferase system (sugar PTS), a major carbohydrate active transport system, catalyzes the phosphorylation of incoming sugar substrates concomitantly with their translocation across the cell membrane. The enzyme II ManXYZ PTS system is involved in mannose transport. The protein is PTS system mannose-specific EIID component (manZ) of Escherichia coli O6:H1 (strain CFT073 / ATCC 700928 / UPEC).